Reading from the N-terminus, the 157-residue chain is Transcription elongation factor GreA (157 aa).

This sequence belongs to the GreA/GreB family.

Functionally, necessary for efficient RNA polymerase transcription elongation past template-encoded arresting sites. The arresting sites in DNA have the property of trapping a certain fraction of elongating RNA polymerases that pass through, resulting in locked ternary complexes. Cleavage of the nascent transcript by cleavage factors such as GreA or GreB allows the resumption of elongation from the new 3'terminus. GreA releases sequences of 2 to 3 nucleotides. This Caulobacter vibrioides (strain ATCC 19089 / CIP 103742 / CB 15) (Caulobacter crescentus) protein is Transcription elongation factor GreA.